The sequence spans 516 residues: Delta(24)-sterol reductase (516 aa).

A signal peptide spans 1–22 (MEPAVSLAVCALLFLLWVRVKG). At 23 to 31 (LEFVLIHQR) the chain is on the lumenal side. Residues 32 to 52 (WVFVCLFLLPLSLIFDIYYYV) form a helical membrane-spanning segment. Residues 53 to 516 (RAWVVFKLSS…YDKICKAARH (464 aa)) are Cytoplasmic-facing. Residues 58-234 (FKLSSAPRLH…VAAEIRIIPA (177 aa)) enclose the FAD-binding PCMH-type domain. 163–175 (TVGGLIMGTGIES) contacts FAD.

It belongs to the FAD-binding oxidoreductase/transferase type 4 family. FAD is required as a cofactor.

The protein localises to the endoplasmic reticulum membrane. It is found in the golgi apparatus membrane. The enzyme catalyses 5alpha-cholest-8-en-3beta-ol + NADP(+) = zymosterol + NADPH + H(+). It carries out the reaction cholesterol + NADP(+) = desmosterol + NADPH + H(+). The catalysed reaction is lanosterol + NADPH + H(+) = 24,25-dihydrolanosterol + NADP(+). The protein operates within steroid biosynthesis; cholesterol biosynthesis. In terms of biological role, catalyzes the reduction of the delta-24 double bond of sterol intermediates during cholesterol biosynthesis. In addition to its cholesterol-synthesizing activity, can protect cells from oxidative stress by reducing caspase 3 activity during apoptosis induced by oxidative stress. Also protects against amyloid-beta peptide-induced apoptosis. This is Delta(24)-sterol reductase (Dhcr24) from Mus musculus (Mouse).